The sequence spans 361 residues: Caspase activity and apoptosis inhibitor 1 (361 aa).

The span at 1–14 shows a compositional bias: basic residues; sequence MTGKKSSREKRRKR. 2 disordered regions span residues 1 to 28 and 67 to 100; these read MTGK…APDI and GGSG…GSLQ. Residues 19-28 are compositionally biased toward low complexity; the sequence is AAAALAAPDI. Phosphoserine is present on S89. Position 90 is a phosphothreonine (T90). K104 is covalently cross-linked (Glycyl lysine isopeptide (Lys-Gly) (interchain with G-Cter in SUMO2)). Phosphoserine occurs at positions 120 and 203. Disordered regions lie at residues 198 to 218 and 230 to 331; these read DNGM…MGSD and ASSV…DVQP. Positions 199 to 210 are enriched in acidic residues; sequence NGMDSDMEEEAD. Over residues 234–251 the composition is skewed to basic and acidic residues; sequence RENKQPEGLELKQGKGED. The segment covering 272 to 281 has biased composition (low complexity); the sequence is EEAAAPEAPE. Residues 281 to 311 adopt a coiled-coil conformation; sequence ENTVQSEAGQIDDLEKDIEKSVNEILGLAES. At S312 the chain carries Phosphoserine.

Ubiquitous.

Functionally, anti-apoptotic protein that modulates a caspase-10 dependent mitochondrial caspase-3/9 feedback amplification loop. The protein is Caspase activity and apoptosis inhibitor 1 (CAAP1) of Homo sapiens (Human).